A 961-amino-acid chain; its full sequence is Vitamin B12-dependent ribonucleotide reductase (961 aa).

The tract at residues 1 to 23 (MTETTSGPARGSRTKGTKATKGL) is disordered. Substrate contacts are provided by residues S143, 159–160 (AC), G188, 364–368 (NPCSE), and 554–558 (PTGTI). C160 and C377 form a disulfide bridge. N364 functions as the Proton acceptor in the catalytic mechanism. Residue C366 is the Cysteine radical intermediate of the active site. E368 functions as the Proton acceptor in the catalytic mechanism.

It belongs to the ribonucleoside diphosphate reductase class-2 family. In terms of assembly, homotetramer. It depends on adenosylcob(III)alamin as a cofactor.

It catalyses the reaction a 2'-deoxyribonucleoside 5'-diphosphate + [thioredoxin]-disulfide + H2O = a ribonucleoside 5'-diphosphate + [thioredoxin]-dithiol. Functionally, catalyzes the reduction of ribonucleotides to deoxyribonucleotides. May function to provide a pool of deoxyribonucleotide precursors for DNA repair during oxygen limitation and/or for immediate growth after restoration of oxygen. In Streptomyces clavuligerus, this protein is Vitamin B12-dependent ribonucleotide reductase (nrdJ).